The primary structure comprises 85 residues: Toxin AahP1005 (85 aa).

The signal sequence occupies residues Met1–Ser19. In terms of domain architecture, LCN-type CS-alpha/beta spans Lys21–Asn83. 4 cysteine pairs are disulfide-bonded: Cys31–Cys82, Cys35–Cys55, Cys41–Cys65, and Cys45–Cys67. Asn83 carries the asparagine amide modification.

It belongs to the long (4 C-C) scorpion toxin superfamily. Sodium channel inhibitor family. Alpha subfamily. Expressed by the venom gland.

It is found in the secreted. Its function is as follows. Alpha toxins bind voltage-independently at site-3 of sodium channels (Nav) and inhibit the inactivation of the activated channels, thereby blocking neuronal transmission. The sequence is that of Toxin AahP1005 from Androctonus australis (Sahara scorpion).